A 339-amino-acid polypeptide reads, in one-letter code: Anthranilate phosphoribosyltransferase (339 aa).

Residues G80, 83–84, T88, 90–93, 108–116, and S120 each bind 5-phospho-alpha-D-ribose 1-diphosphate; these read GD, NIST, and KHGNRSVSS. G80 contacts anthranilate. S92 is a binding site for Mg(2+). N111 lines the anthranilate pocket. R166 is a binding site for anthranilate. The Mg(2+) site is built by D225 and E226.

This sequence belongs to the anthranilate phosphoribosyltransferase family. As to quaternary structure, homodimer. Mg(2+) serves as cofactor.

It carries out the reaction N-(5-phospho-beta-D-ribosyl)anthranilate + diphosphate = 5-phospho-alpha-D-ribose 1-diphosphate + anthranilate. It functions in the pathway amino-acid biosynthesis; L-tryptophan biosynthesis; L-tryptophan from chorismate: step 2/5. Catalyzes the transfer of the phosphoribosyl group of 5-phosphorylribose-1-pyrophosphate (PRPP) to anthranilate to yield N-(5'-phosphoribosyl)-anthranilate (PRA). In Moorella thermoacetica (strain ATCC 39073 / JCM 9320), this protein is Anthranilate phosphoribosyltransferase.